Reading from the N-terminus, the 400-residue chain is uncharacterized protein (400 aa).

Positions 161-380 (NDLLNIIDIV…YVVKVIVMRL (220 aa)) constitute a TR mART core domain.

This is an uncharacterized protein from Acanthamoeba polyphaga (Amoeba).